The chain runs to 430 residues: Phosphoribosylamine--glycine ligase (430 aa).

In terms of domain architecture, ATP-grasp spans 109–316; that stretch reads KDFMARHGIP…LLDLIEAALN (208 aa). 135–196 is an ATP binding site; it reads VRQQGAPIVI…EEYLDGEEAS (62 aa). Mg(2+)-binding residues include glutamate 286 and asparagine 288.

The protein belongs to the GARS family. Requires Mg(2+) as cofactor. Mn(2+) is required as a cofactor.

The catalysed reaction is 5-phospho-beta-D-ribosylamine + glycine + ATP = N(1)-(5-phospho-beta-D-ribosyl)glycinamide + ADP + phosphate + H(+). It participates in purine metabolism; IMP biosynthesis via de novo pathway; N(1)-(5-phospho-D-ribosyl)glycinamide from 5-phospho-alpha-D-ribose 1-diphosphate: step 2/2. The protein is Phosphoribosylamine--glycine ligase of Xylella fastidiosa (strain Temecula1 / ATCC 700964).